Consider the following 84-residue polypeptide: uncharacterized protein (84 aa).

This is an uncharacterized protein from Azorhizobium caulinodans (strain ATCC 43989 / DSM 5975 / JCM 20966 / LMG 6465 / NBRC 14845 / NCIMB 13405 / ORS 571).